A 357-amino-acid polypeptide reads, in one-letter code: Phosphoribosylformylglycinamidine cyclo-ligase (357 aa).

Belongs to the AIR synthase family.

It localises to the cytoplasm. It catalyses the reaction 2-formamido-N(1)-(5-O-phospho-beta-D-ribosyl)acetamidine + ATP = 5-amino-1-(5-phospho-beta-D-ribosyl)imidazole + ADP + phosphate + H(+). The protein operates within purine metabolism; IMP biosynthesis via de novo pathway; 5-amino-1-(5-phospho-D-ribosyl)imidazole from N(2)-formyl-N(1)-(5-phospho-D-ribosyl)glycinamide: step 2/2. This chain is Phosphoribosylformylglycinamidine cyclo-ligase, found in Rhizobium leguminosarum bv. trifolii (strain WSM2304).